Consider the following 600-residue polypeptide: Zinc metalloproteinase-disintegrin-like cobrin (600 aa).

Positions 1–8 (MIQLSWSS) are cleaved as a signal peptide. A propeptide spanning residues 9–179 (IILESGNVND…DEPIKKTSLL (171 aa)) is cleaved from the precursor. The region spanning 193–388 (KYIEFYMVVD…DRPQCILNKP (196 aa)) is the Peptidase M12B domain. Residues E196 and D280 each coordinate Ca(2+). 3 cysteine pairs are disulfide-bonded: C304–C383, C344–C367, and C346–C351. 3 residues coordinate Zn(2+): H329, H333, and H339. C383, N386, I398, N401, F403, E405, E408, and D411 together coordinate Ca(2+). Residues 396–482 (PPICGNYFVE…ECPTDVFQRN (87 aa)) form the Disintegrin domain. 14 disulfides stabilise this stretch: C399-C428, C410-C423, C412-C418, C422-C445, C436-C442, C441-C467, C454-C474, C461-C492, C486-C497, C504-C554, C519-C562, C532-C542, C549-C588, and C582-C593. N-linked (GlcNAc...) asparagine glycosylation is present at N424. The short motif at 460-462 (DCD) is the D/ECD-tripeptide element. Ca(2+) is bound by residues D462, L463, E465, D477, and V478.

The protein belongs to the venom metalloproteinase (M12B) family. P-III subfamily. P-IIIa sub-subfamily. In terms of assembly, monomer. Requires Zn(2+) as cofactor. In terms of tissue distribution, expressed by the venom gland.

It is found in the secreted. In terms of biological role, snake venom zinc metalloproteinase that may cleave complement protein C3 into C3c-like (C3o). The protein is Zinc metalloproteinase-disintegrin-like cobrin of Naja kaouthia (Monocled cobra).